We begin with the raw amino-acid sequence, 574 residues long: MDKYDKIIDLTKRRGFLWNSFEIYGGIAGFFDYGPLGAILKNNVINTWRKHYIVNEGFYEIDSPTVTPYEVLKASGHVENFTDPLVECKECLESFRADHIIEENVDVDTEGKTLQELQEMIEKNNIKCPKCGGEFKEVSTFNLMFATSIGPGGKRAAFMRPETAQGIFIQFKRISQFFRNKLPFGAVQIGKAYRNEISPRQGVIRLREFTQAEGEFFIDSRKKENFEKFESVKDMVLPLLPGKNQENESLSAEEKIVRMSLSDAVKNGVIAHEAIAYYVAVTKKFLMEIGIDESKLRFRQHLPNEMAHYAADCWDAELYTDRYGWIECVGIADRTNYDLLAHMKNSSEDLSVFVELDEDKEVEVYEIELNYKLVGRTFKGDAKILEESLKELNDKKMEELVEALETEGKYVLKTCKRDFEILKEYLTAKKVKKIVKGEKIIPHVIEPSYGIDRITYCVMEHAFKEEEDRTVMGFSNAVSPIKVGVFPLVNKEGMPEIAMDLKNKLRENGLIAEYDDSGAIGRRYMRMDEVGTPFCVTIDGETLTDRSVTIRERDSREQFRIPINEVVSYIKDKL.

R96 and E162 together coordinate substrate. Residues 194–196 (RNE), 204–209 (IRLREF), 327–328 (EC), and 450–453 (GIDR) contribute to the ATP site. 209–213 (FTQAE) lines the substrate pocket. A substrate-binding site is contributed by 446–450 (EPSYG).

It belongs to the class-II aminoacyl-tRNA synthetase family.

The protein resides in the cytoplasm. It catalyses the reaction tRNA(Gly) + glycine + ATP = glycyl-tRNA(Gly) + AMP + diphosphate. Functionally, catalyzes the attachment of glycine to tRNA(Gly). This is Glycine--tRNA ligase from Methanococcus maripaludis (strain C7 / ATCC BAA-1331).